A 465-amino-acid polypeptide reads, in one-letter code: tRNA-2-methylthio-N(6)-dimethylallyladenosine synthase (465 aa).

The MTTase N-terminal domain occupies Arg5–Arg125. Positions 14, 50, 88, 166, 170, and 173 each coordinate [4Fe-4S] cluster. In terms of domain architecture, Radical SAM core spans Arg152–Gln382. The region spanning Arg387 to Lys449 is the TRAM domain.

It belongs to the methylthiotransferase family. MiaB subfamily. As to quaternary structure, monomer. [4Fe-4S] cluster serves as cofactor.

It localises to the cytoplasm. It catalyses the reaction N(6)-dimethylallyladenosine(37) in tRNA + (sulfur carrier)-SH + AH2 + 2 S-adenosyl-L-methionine = 2-methylsulfanyl-N(6)-dimethylallyladenosine(37) in tRNA + (sulfur carrier)-H + 5'-deoxyadenosine + L-methionine + A + S-adenosyl-L-homocysteine + 2 H(+). Catalyzes the methylthiolation of N6-(dimethylallyl)adenosine (i(6)A), leading to the formation of 2-methylthio-N6-(dimethylallyl)adenosine (ms(2)i(6)A) at position 37 in tRNAs that read codons beginning with uridine. The polypeptide is tRNA-2-methylthio-N(6)-dimethylallyladenosine synthase (Rhodopseudomonas palustris (strain BisA53)).